We begin with the raw amino-acid sequence, 212 residues long: Uracil phosphoribosyltransferase (212 aa).

Residues Arg78, Arg103, and 130-138 contribute to the 5-phospho-alpha-D-ribose 1-diphosphate site; that span reads DPMLATGGS. Uracil contacts are provided by residues Ile193 and 198 to 200; that span reads GDA. Residue Asp199 participates in 5-phospho-alpha-D-ribose 1-diphosphate binding.

The protein belongs to the UPRTase family. Mg(2+) is required as a cofactor.

The catalysed reaction is UMP + diphosphate = 5-phospho-alpha-D-ribose 1-diphosphate + uracil. It functions in the pathway pyrimidine metabolism; UMP biosynthesis via salvage pathway; UMP from uracil: step 1/1. With respect to regulation, allosterically activated by GTP. In terms of biological role, catalyzes the conversion of uracil and 5-phospho-alpha-D-ribose 1-diphosphate (PRPP) to UMP and diphosphate. The chain is Uracil phosphoribosyltransferase from Pseudomonas paraeruginosa (strain DSM 24068 / PA7) (Pseudomonas aeruginosa (strain PA7)).